A 59-amino-acid chain; its full sequence is Single-pass membrane and coiled-coil domain-containing protein 4 (59 aa).

Positions 1-23 are disordered; that stretch reads MRQLKGKPKKETSKDKKERKQAM. The span at 9–22 shows a compositional bias: basic and acidic residues; that stretch reads KKETSKDKKERKQA. Positions 9-31 form a coiled coil; that stretch reads KKETSKDKKERKQAMQEARQQIT. A helical transmembrane segment spans residues 32 to 52; that stretch reads TVVLPTLAVVVLLIVVFVYVA.

It belongs to the SMCO4 family.

It is found in the membrane. This Homo sapiens (Human) protein is Single-pass membrane and coiled-coil domain-containing protein 4 (SMCO4).